The sequence spans 259 residues: 3-deoxy-manno-octulosonate cytidylyltransferase (259 aa).

This sequence belongs to the KdsB family.

The protein localises to the cytoplasm. The enzyme catalyses 3-deoxy-alpha-D-manno-oct-2-ulosonate + CTP = CMP-3-deoxy-beta-D-manno-octulosonate + diphosphate. Its pathway is nucleotide-sugar biosynthesis; CMP-3-deoxy-D-manno-octulosonate biosynthesis; CMP-3-deoxy-D-manno-octulosonate from 3-deoxy-D-manno-octulosonate and CTP: step 1/1. It participates in bacterial outer membrane biogenesis; lipopolysaccharide biosynthesis. Activates KDO (a required 8-carbon sugar) for incorporation into bacterial lipopolysaccharide in Gram-negative bacteria. The polypeptide is 3-deoxy-manno-octulosonate cytidylyltransferase (Alkalilimnicola ehrlichii (strain ATCC BAA-1101 / DSM 17681 / MLHE-1)).